The chain runs to 436 residues: F-box/LRR-repeat protein 20 (436 aa).

The region spanning 22–68 (AVINKKLPKELLLRIFSFLDVVTLCRCAQVSRAWNVLALDGSNWQRI) is the F-box domain. 13 LRR repeats span residues 74–100 (QRDI…SLRG), 101–126 (CLGV…SLNG), 127–152 (CTKT…DLAS), 153–178 (CTSI…NISW), 179–204 (CDQV…FLKG), 205–230 (CTQL…NLQT), 231–256 (CLQI…CASG), 257–282 (CSNI…EVAR), 283–308 (CSQL…DLEE), 309–334 (CVQI…SLSH), 335–363 (CELI…ELDN), 364–388 (CPLI…ELYD), and 389–414 (CQQI…AYFA). Phosphothreonine is present on threonine 417. Residue serine 421 is modified to Phosphoserine.

As to quaternary structure, interacts with SKP1 and CUL1. In terms of tissue distribution, highly expressed in brain.

Its subcellular location is the cytoplasm. In terms of biological role, substrate-recognition component of the SCF (SKP1-CUL1-F-box protein)-type E3 ubiquitin ligase complex. Isoform 3 regulates neural transmission by binding and ubiquitinating RIMS1, a modulator of presynaptic plasticity. The protein is F-box/LRR-repeat protein 20 (Fbxl20) of Mus musculus (Mouse).